The following is a 237-amino-acid chain: UPF0280 protein Mthe_1297 (237 aa).

The protein belongs to the UPF0280 family.

The sequence is that of UPF0280 protein Mthe_1297 from Methanothrix thermoacetophila (strain DSM 6194 / JCM 14653 / NBRC 101360 / PT) (Methanosaeta thermophila).